Consider the following 475-residue polypeptide: UDP-N-acetylmuramate--L-alanine ligase (475 aa).

118 to 124 (GTHGKTT) contacts ATP.

The protein belongs to the MurCDEF family.

The protein localises to the cytoplasm. The enzyme catalyses UDP-N-acetyl-alpha-D-muramate + L-alanine + ATP = UDP-N-acetyl-alpha-D-muramoyl-L-alanine + ADP + phosphate + H(+). Its pathway is cell wall biogenesis; peptidoglycan biosynthesis. Its function is as follows. Cell wall formation. The sequence is that of UDP-N-acetylmuramate--L-alanine ligase from Thermosynechococcus vestitus (strain NIES-2133 / IAM M-273 / BP-1).